A 151-amino-acid chain; its full sequence is MDPSKLAKLQAGARIGGKGTPRRKVKKPSKSAMSAADDKKVQGALKKLNMQNLAGIQEVNMFKEDGGVINFRAPTVHSSLPNETTAIYGKAEEKTLSEILPGILNNLGPESLTALRQMAEQLKVSEGEKGADAQADDGEIPDLVEKFDEQD.

2 disordered regions span residues 1–38 (MDPS…AADD) and 123–151 (KVSE…DEQD). Residues 20-29 (TPRRKVKKPS) are compositionally biased toward basic residues. Residues 35 to 100 (AADDKKVQGA…AEEKTLSEIL (66 aa)) enclose the NAC-A/B domain.

Belongs to the NAC-beta family. As to quaternary structure, part of the nascent polypeptide-associated complex (NAC), consisting of ucp15 and btf3. NAC associates with ribosomes via btf3.

The protein resides in the cytoplasm. Its subcellular location is the nucleus. Component of the nascent polypeptide-associated complex (NAC), a dynamic component of the ribosomal exit tunnel, protecting the emerging polypeptides from interaction with other cytoplasmic proteins to ensure appropriate nascent protein targeting. The NAC complex also promotes mitochondrial protein import by enhancing productive ribosome interactions with the outer mitochondrial membrane and blocks the inappropriate interaction of ribosomes translating non-secretory nascent polypeptides with translocation sites in the membrane of the endoplasmic reticulum. EGD1 may act as a transcription factor that exert a negative effect on the expression of several genes that are transcribed by RNA polymerase II. This is Nascent polypeptide-associated complex subunit beta (btf3) from Schizosaccharomyces pombe (strain 972 / ATCC 24843) (Fission yeast).